Here is a 215-residue protein sequence, read N- to C-terminus: Translation initiation factor 6 (215 aa).

It belongs to the eIF-6 family.

In terms of biological role, binds to the 50S ribosomal subunit and prevents its association with the 30S ribosomal subunit to form the 70S initiation complex. The chain is Translation initiation factor 6 from Archaeoglobus fulgidus (strain ATCC 49558 / DSM 4304 / JCM 9628 / NBRC 100126 / VC-16).